The sequence spans 380 residues: 1-deoxy-D-xylulose 5-phosphate reductoisomerase (380 aa).

S10, G11, S12, I13, G36, K37, N38, and N120 together coordinate NADPH. K121 contacts 1-deoxy-D-xylulose 5-phosphate. E122 contacts NADPH. Residue D146 participates in Mn(2+) binding. The 1-deoxy-D-xylulose 5-phosphate site is built by S147, E148, S172, and H195. Residue E148 coordinates Mn(2+). G201 serves as a coordination point for NADPH. Residues S208, N213, K214, and E217 each coordinate 1-deoxy-D-xylulose 5-phosphate. E217 is a binding site for Mn(2+).

The protein belongs to the DXR family. Mg(2+) is required as a cofactor. The cofactor is Mn(2+).

The enzyme catalyses 2-C-methyl-D-erythritol 4-phosphate + NADP(+) = 1-deoxy-D-xylulose 5-phosphate + NADPH + H(+). The protein operates within isoprenoid biosynthesis; isopentenyl diphosphate biosynthesis via DXP pathway; isopentenyl diphosphate from 1-deoxy-D-xylulose 5-phosphate: step 1/6. In terms of biological role, catalyzes the NADPH-dependent rearrangement and reduction of 1-deoxy-D-xylulose-5-phosphate (DXP) to 2-C-methyl-D-erythritol 4-phosphate (MEP). This chain is 1-deoxy-D-xylulose 5-phosphate reductoisomerase, found in Bacillus cereus (strain Q1).